Here is an 83-residue protein sequence, read N- to C-terminus: MKASMFLALAGLVLLFVVGYASESEEKEFPIELLSKIFAVDVFKGEERGCKGFGDSCTPGKNECCPDHACSNKHKWCKVYLGK.

A signal peptide spans 1–21 (MKASMFLALAGLVLLFVVGYA). Positions 22–48 (SESEEKEFPIELLSKIFAVDVFKGEER) are excised as a propeptide. 3 disulfide bridges follow: C50–C65, C57–C70, and C64–C77. L81 carries the leucine amide modification.

It belongs to the neurotoxin 10 (Hwtx-1) family. 15 (Hntx-3) subfamily. Monomer. As to expression, expressed by the venom gland.

It localises to the secreted. Its function is as follows. Lethal neurotoxin. Selectively blocks tetrodotoxin-sensitive voltage-gated sodium channels (Nav). Does not affect tetrodotoxin-resistant voltage-gated sodium channels or calcium channels. The polypeptide is Mu-theraphotoxin-Hhn2l (Cyriopagopus hainanus (Chinese bird spider)).